Consider the following 320-residue polypeptide: Serpentine receptor class delta-28 (320 aa).

A run of 7 helical transmembrane segments spans residues 5 to 25 (LLHT…MYLA), 38 to 58 (AIIT…FFVM), 83 to 103 (ACYI…IWMI), 122 to 142 (SLVF…ATWI), 176 to 196 (LTLI…YAWI), 230 to 250 (FLPS…TQLI), and 258 to 278 (LVSV…ILFV).

Belongs to the nematode receptor-like protein srd family.

The protein localises to the membrane. This chain is Serpentine receptor class delta-28 (srd-28), found in Caenorhabditis elegans.